The primary structure comprises 414 residues: Tryptophan synthase beta chain (414 aa).

The tract at residues 1–26 is disordered; sequence MVSTFSRKNQNYKKDDLNQPSKDGRF. Positions 12-26 are enriched in basic and acidic residues; sequence YKKDDLNQPSKDGRF. At Lys-109 the chain carries N6-(pyridoxal phosphate)lysine.

Belongs to the TrpB family. In terms of assembly, tetramer of two alpha and two beta chains. The cofactor is pyridoxal 5'-phosphate.

The catalysed reaction is (1S,2R)-1-C-(indol-3-yl)glycerol 3-phosphate + L-serine = D-glyceraldehyde 3-phosphate + L-tryptophan + H2O. Its pathway is amino-acid biosynthesis; L-tryptophan biosynthesis; L-tryptophan from chorismate: step 5/5. In terms of biological role, the beta subunit is responsible for the synthesis of L-tryptophan from indole and L-serine. The chain is Tryptophan synthase beta chain from Prochlorococcus marinus (strain MIT 9215).